Reading from the N-terminus, the 748-residue chain is Meprin A subunit alpha (748 aa).

The signal sequence occupies residues 1 to 20 (MLWTLPVCLLSLSFSAHIAA). A propeptide spanning residues 21–66 (VSIQHLSTGHDHDDVDVGEQQKDISEINSAAGLNLFQGDILLPRTR) is cleaved from the precursor. Residues 67-261 (NALRDPSSRW…TRLNRMYNCT (195 aa)) form the Peptidase M12A domain. Residues 67–719 (NALRDPSSRW…RCQAMHVHGS (653 aa)) lie on the Extracellular side of the membrane. 3 disulfides stabilise this stretch: Cys-108–Cys-260, Cys-129–Cys-148, and Cys-270–Cys-432. N-linked (GlcNAc...) asparagine glycosylation is present at Asn-141. His-156 provides a ligand contact to Zn(2+). Glu-157 is a catalytic residue. Zn(2+)-binding residues include His-160 and His-166. Asn-223, Asn-259, Asn-319, Asn-441, and Asn-542 each carry an N-linked (GlcNAc...) asparagine glycan. The MAM domain maps to 265–434 (TLLDHCAFEK…ITLTETPCPT (170 aa)). The 162-residue stretch at 435–596 (GVWTIRNISQ…DDTLIIFVDF (162 aa)) folds into the MATH domain. The tract at residues 641-668 (LPRRLDQRQPSRPKRSVENTGPMEDHNW) is disordered. The 41-residue stretch at 672–712 (FRDPCDPNPCQNEGTCVNVKGMASCRCVSGHAFFYTGERCQ) folds into the EGF-like domain. Cystine bridges form between Cys-676/Cys-687, Cys-681/Cys-696, and Cys-698/Cys-711. A helical transmembrane segment spans residues 720–739 (LLGLLIGCITALIFLTFITF). At 740–748 (SNTYQKLRQ) the chain is on the cytoplasmic side.

In terms of assembly, homotetramer consisting of disulfide-linked alpha subunits, homooligomer consisting of disulfide-linked alpha subunit homodimers, or heterotetramer of two alpha and two beta subunits formed by non-covalent association of two disulfide-linked heterodimers. Interacts with MBL2 through its carbohydrate moiety. This interaction may inhibit its catalytic activity. Requires Zn(2+) as cofactor. Post-translationally, N-glycosylated; contains GlcNAc, galactose, mannose and a small amount of fucose. Colocalized with E-24.11 in proximal tubules of juxtamedullary nephrons.

Its subcellular location is the membrane. It carries out the reaction Hydrolysis of protein and peptide substrates preferentially on carboxyl side of hydrophobic residues.. Its activity is regulated as follows. Inhibited by actinonin. This is Meprin A subunit alpha (Mep1a) from Rattus norvegicus (Rat).